The chain runs to 93 residues: Small ribosomal subunit protein uS19 (93 aa).

Belongs to the universal ribosomal protein uS19 family.

Functionally, protein S19 forms a complex with S13 that binds strongly to the 16S ribosomal RNA. The sequence is that of Small ribosomal subunit protein uS19 from Geobacter sulfurreducens (strain ATCC 51573 / DSM 12127 / PCA).